A 408-amino-acid polypeptide reads, in one-letter code: Phosphoglycerate kinase (408 aa).

Residues 24–26 (DLN), Arg-39, 62–65 (HLGR), Arg-121, and Arg-161 each bind substrate. ATP is bound by residues Lys-211, Gly-307, Glu-338, and 364-367 (GGDS).

It belongs to the phosphoglycerate kinase family. Monomer.

It localises to the cytoplasm. It carries out the reaction (2R)-3-phosphoglycerate + ATP = (2R)-3-phospho-glyceroyl phosphate + ADP. Its pathway is carbohydrate degradation; glycolysis; pyruvate from D-glyceraldehyde 3-phosphate: step 2/5. This Pseudarthrobacter chlorophenolicus (strain ATCC 700700 / DSM 12829 / CIP 107037 / JCM 12360 / KCTC 9906 / NCIMB 13794 / A6) (Arthrobacter chlorophenolicus) protein is Phosphoglycerate kinase.